The sequence spans 75 residues: Small ribosomal subunit protein bS18 (75 aa).

This sequence belongs to the bacterial ribosomal protein bS18 family. Part of the 30S ribosomal subunit. Forms a tight heterodimer with protein bS6.

Functionally, binds as a heterodimer with protein bS6 to the central domain of the 16S rRNA, where it helps stabilize the platform of the 30S subunit. The sequence is that of Small ribosomal subunit protein bS18 from Thermotoga maritima (strain ATCC 43589 / DSM 3109 / JCM 10099 / NBRC 100826 / MSB8).